A 340-amino-acid chain; its full sequence is Ketol-acid reductoisomerase (NADP(+)) (340 aa).

One can recognise a KARI N-terminal Rossmann domain in the interval 1 to 183 (MAITVYYDKD…GGGRTGIIET (183 aa)). NADP(+)-binding positions include 26–29 (FGSQ), Ser54, and 84–87 (DEFQ). His109 is an active-site residue. Position 135 (Gly135) interacts with NADP(+). The 146-residue stretch at 184-329 (TFKAETETDL…EKLRGMMPWI (146 aa)) folds into the KARI C-terminal knotted domain. 4 residues coordinate Mg(2+): Asp192, Glu196, Glu228, and Glu232. Ser253 provides a ligand contact to substrate.

The protein belongs to the ketol-acid reductoisomerase family. Mg(2+) serves as cofactor.

The enzyme catalyses (2R)-2,3-dihydroxy-3-methylbutanoate + NADP(+) = (2S)-2-acetolactate + NADPH + H(+). It carries out the reaction (2R,3R)-2,3-dihydroxy-3-methylpentanoate + NADP(+) = (S)-2-ethyl-2-hydroxy-3-oxobutanoate + NADPH + H(+). Its pathway is amino-acid biosynthesis; L-isoleucine biosynthesis; L-isoleucine from 2-oxobutanoate: step 2/4. The protein operates within amino-acid biosynthesis; L-valine biosynthesis; L-valine from pyruvate: step 2/4. Involved in the biosynthesis of branched-chain amino acids (BCAA). Catalyzes an alkyl-migration followed by a ketol-acid reduction of (S)-2-acetolactate (S2AL) to yield (R)-2,3-dihydroxy-isovalerate. In the isomerase reaction, S2AL is rearranged via a Mg-dependent methyl migration to produce 3-hydroxy-3-methyl-2-ketobutyrate (HMKB). In the reductase reaction, this 2-ketoacid undergoes a metal-dependent reduction by NADPH to yield (R)-2,3-dihydroxy-isovalerate. This is Ketol-acid reductoisomerase (NADP(+)) from Campylobacter fetus subsp. fetus (strain 82-40).